The chain runs to 352 residues: Tropomodulin-3 (352 aa).

Phosphoserine is present on Ser-25.

It belongs to the tropomodulin family. In terms of assembly, binds to the N-terminus of tropomyosin and to actin. Interacts with FLII. Ubiquitous.

Its subcellular location is the cytoplasm. It localises to the cytoskeleton. Blocks the elongation and depolymerization of the actin filaments at the pointed end. The Tmod/TM complex contributes to the formation of the short actin protofilament, which in turn defines the geometry of the membrane skeleton. The sequence is that of Tropomodulin-3 (Tmod3) from Mus musculus (Mouse).